The following is a 251-amino-acid chain: Hydroxyacylglutathione hydrolase (251 aa).

His53, His55, Asp57, His58, His110, Asp127, and His165 together coordinate Zn(2+).

The protein belongs to the metallo-beta-lactamase superfamily. Glyoxalase II family. As to quaternary structure, monomer. Zn(2+) serves as cofactor.

It carries out the reaction an S-(2-hydroxyacyl)glutathione + H2O = a 2-hydroxy carboxylate + glutathione + H(+). It functions in the pathway secondary metabolite metabolism; methylglyoxal degradation; (R)-lactate from methylglyoxal: step 2/2. Thiolesterase that catalyzes the hydrolysis of S-D-lactoyl-glutathione to form glutathione and D-lactic acid. The chain is Hydroxyacylglutathione hydrolase from Escherichia coli O45:K1 (strain S88 / ExPEC).